Consider the following 498-residue polypeptide: Cytochrome P450 monooxygenase idtP (498 aa).

The N-terminal stretch at 1 to 20 is a signal peptide; that stretch reads MFLLHILAIGACLLWYFVRS. Heme is bound at residue Cys-439.

It belongs to the cytochrome P450 family. Heme is required as a cofactor.

The protein operates within secondary metabolite biosynthesis. Its function is as follows. Cytochrome P450 monooxygenase; part of the gene cluster that mediates the biosynthesis of paspalitrems, indole-diterpene (IDT) mycotoxins that are potent tremorgens in mammals. The geranylgeranyl diphosphate (GGPP) synthase idtG is proposed to catalyze the first step in IDT biosynthesis via catalysis of a series of iterative condensations of isopentenyl diphosphate (IPP) with dimethylallyl diphosphate (DMAPP), geranyl diphosphate (GPP), and farnesyl diphosphate (FPP), to form GGPP. Condensation of indole-3-glycerol phosphate with GGPP by the prenyltransferase idtC then forms 3-geranylgeranylindole (3-GGI). Epoxidation of the two terminal alkenes of the geranylgeranyl moiety by the FAD-dependent monooxygenase idtM, and cyclization by the terpene cyclase idtB then leads to the production of paspaline. The cytochrome P450 monooxygenase idtP then catalyzes oxidative elimination of the pendant methyl group at C-12 of paspaline and generates the C-10 ketone to yield 13-desoxypaxilline. The cytochrome P450 monooxygenase idtQ may catalyze the C-13 oxidation of 13-desoxypaxilline to afford paxilline. Considering that both paspalicine and paxilline were detected in C.paspali, idtQ also catalyzes the formation of paspalinine from 13-desoxypaxilline via paspalicine as an intermediate. Finally, the alpha-prenyltransferase idtF prenylates paspalinine at the C-20 or the C-21 positions to yield paspalitrems A and C, respectively. The hydroxylation of paspalitrem A at C-32 by a still unknown oxidase affords paspalitrem B. This is Cytochrome P450 monooxygenase idtP from Claviceps paspali (Rye ergot fungus).